A 295-amino-acid polypeptide reads, in one-letter code: Glutamyl-Q tRNA(Asp) synthetase (295 aa).

Residues 9 to 13 (RFAPT) and glutamate 45 contribute to the L-glutamate site. The short motif at 12–22 (PTPSGFLHFGS) is the 'HIGH' region element. Positions 101, 103, 115, and 119 each coordinate Zn(2+). L-glutamate contacts are provided by tyrosine 172 and arginine 190. Positions 228–232 (KLGKS) match the 'KMSKS' region motif. Position 231 (lysine 231) interacts with ATP.

This sequence belongs to the class-I aminoacyl-tRNA synthetase family. GluQ subfamily. Zn(2+) serves as cofactor.

Functionally, catalyzes the tRNA-independent activation of glutamate in presence of ATP and the subsequent transfer of glutamate onto a tRNA(Asp). Glutamate is transferred on the 2-amino-5-(4,5-dihydroxy-2-cyclopenten-1-yl) moiety of the queuosine in the wobble position of the QUC anticodon. This Pseudomonas putida (strain GB-1) protein is Glutamyl-Q tRNA(Asp) synthetase.